The chain runs to 267 residues: Myeloid leukemia factor 1 (267 aa).

A phosphoserine mark is found at Ser-6, Ser-8, Ser-32, and Ser-34. The interval 39–67 is disordered; it reads RDLLSISDGRGRTHNRRERDDGEDSLTHA. Residues 50-125 are interaction with COPS3; that stretch reads RTHNRRERDD…VGDEPPKVFQ (76 aa).

This sequence belongs to the MLF family. In terms of assembly, interacts with CENPU. Also interacts with NRBP1/MADM, YWHAZ/14-3-3-zeta and HNRPUL2/MANP. NRBP1 recruits a serine kinase which phosphorylates both itself and MLF1. Phosphorylated MLF1 then binds to YWHAZ and is retained in the cytoplasm. Retained in the nucleus by binding to HNRPUL2. Binds to COPS3/CSN3 which is required for suppression of COP1 and activation of p53. Post-translationally, phosphorylation is required for binding to YWHAZ. In terms of tissue distribution, highly expressed in skeletal muscle, heart, testis. Also found in lung, but not in spleen, thymus, bone marrow, liver and kidney.

It is found in the cytoplasm. The protein localises to the nucleus. The protein resides in the cell projection. Its subcellular location is the cilium. It localises to the cytoskeleton. It is found in the cilium basal body. Its function is as follows. Involved in lineage commitment of primary hemopoietic progenitors by restricting erythroid formation and enhancing myeloid formation. Interferes with erythropoietin-induced erythroid terminal differentiation by preventing cells from exiting the cell cycle through suppression of CDKN1B/p27Kip1 levels. Suppresses COP1 activity via CSN3 which activates p53 and induces cell cycle arrest. Binds DNA and affects the expression of a number of genes so may function as a transcription factor in the nucleus. This Mus musculus (Mouse) protein is Myeloid leukemia factor 1 (Mlf1).